The sequence spans 27 residues: Potassium channel toxin alpha-KTx 32.1 (27 aa).

2 cysteine pairs are disulfide-bonded: C5-C18 and C12-C25.

In terms of tissue distribution, expressed by the venom gland.

Its subcellular location is the secreted. In terms of biological role, blocker of voltage-gated potassium channels. Inhibits voltage-gated potassium channels Kv1.2/KCNA2 (Kd=0.96 nM) and Kv1.3/KCNA3 (Kd=1.3 nM). Does not inhibit Kv1.1/KCNA1, Kv1.5/KCNA5, Kv11.1/KCNH2/ERG1, KCa1.1/KCNMA1, KCa3.1/KCNN4, NaV1.5/SCN5A, NaV1.4/SCN4A or HV1/HVCN1. Strongly inhibits the expression of the activation markers interleukin-2 receptor and CD40 ligand/CD40LG in anti-CD3-activated CD4(+) TEM lymphocytes. The polypeptide is Potassium channel toxin alpha-KTx 32.1 (Centruroides margaritatus (Central American bark Scorpion)).